Consider the following 203-residue polypeptide: Orotate phosphoribosyltransferase (203 aa).

5-phospho-alpha-D-ribose 1-diphosphate contacts are provided by residues Arg94, Lys98, His100, and 120–128; that span reads EDLISTGGS. Ser124 serves as a coordination point for orotate.

It belongs to the purine/pyrimidine phosphoribosyltransferase family. PyrE subfamily. Homodimer. It depends on Mg(2+) as a cofactor.

The enzyme catalyses orotidine 5'-phosphate + diphosphate = orotate + 5-phospho-alpha-D-ribose 1-diphosphate. The protein operates within pyrimidine metabolism; UMP biosynthesis via de novo pathway; UMP from orotate: step 1/2. In terms of biological role, catalyzes the transfer of a ribosyl phosphate group from 5-phosphoribose 1-diphosphate to orotate, leading to the formation of orotidine monophosphate (OMP). The polypeptide is Orotate phosphoribosyltransferase (Staphylococcus aureus (strain MSSA476)).